A 506-amino-acid polypeptide reads, in one-letter code: Maturase K (506 aa).

The protein belongs to the intron maturase 2 family. MatK subfamily.

The protein localises to the plastid. It localises to the chloroplast. In terms of biological role, usually encoded in the trnK tRNA gene intron. Probably assists in splicing its own and other chloroplast group II introns. The protein is Maturase K of Hydrangea macrophylla (Bigleaf hydrangea).